Here is a 178-residue protein sequence, read N- to C-terminus: Protamine-like protein (178 aa).

Disordered regions lie at residues 1–27 (PSTT…TVSD) and 77–178 (SVVK…RAKK). Composition is skewed to basic residues over residues 8 to 21 (SPKR…RKRT) and 94 to 178 (PRRR…RAKK). The region spanning 21-89 (TGPTVSDLIL…KAKGFYKLNK (69 aa)) is the H15 domain.

In terms of tissue distribution, male germ cells.

It is found in the nucleus. The protein resides in the chromosome. Replaces histones in the chromatin of sperm during the haploid phase of spermatogenesis. Compacts sperm DNA into a highly condensed, stable and inactive complex. The chain is Protamine-like protein from Mullus surmuletus (Striped red mullet).